Here is a 182-residue protein sequence, read N- to C-terminus: ADP-ribosylation factor 1 (182 aa).

Gly-2 is lipidated: N-myristoyl glycine. Residues 24–31 (GLDAAGKT), 67–71 (DVGGQ), and 126–129 (NKQD) contribute to the GTP site.

This sequence belongs to the small GTPase superfamily. Arf family.

It localises to the golgi apparatus. It catalyses the reaction GTP + H2O = GDP + phosphate + H(+). Functionally, GTP-binding protein involved in protein trafficking; may modulate vesicle budding and uncoating within the Golgi apparatus. This chain is ADP-ribosylation factor 1 (arfA), found in Dictyostelium discoideum (Social amoeba).